Consider the following 441-residue polypeptide: Ribosomal protein uS12 methylthiotransferase RimO (441 aa).

In terms of domain architecture, MTTase N-terminal spans 8-118 (PKIGFVSLGC…VLEHVHHYVP (111 aa)). Positions 17, 53, 82, 150, 154, and 157 each coordinate [4Fe-4S] cluster. The Radical SAM core domain maps to 136–373 (LTPRHYAYLK…MQLQQQISAE (238 aa)). The region spanning 376 to 441 (QEKVGREILV…DEYDLWGSRV (66 aa)) is the TRAM domain.

Belongs to the methylthiotransferase family. RimO subfamily. Requires [4Fe-4S] cluster as cofactor.

It is found in the cytoplasm. The catalysed reaction is L-aspartate(89)-[ribosomal protein uS12]-hydrogen + (sulfur carrier)-SH + AH2 + 2 S-adenosyl-L-methionine = 3-methylsulfanyl-L-aspartate(89)-[ribosomal protein uS12]-hydrogen + (sulfur carrier)-H + 5'-deoxyadenosine + L-methionine + A + S-adenosyl-L-homocysteine + 2 H(+). Functionally, catalyzes the methylthiolation of an aspartic acid residue of ribosomal protein uS12. The chain is Ribosomal protein uS12 methylthiotransferase RimO from Escherichia coli (strain UTI89 / UPEC).